A 251-amino-acid polypeptide reads, in one-letter code: Gamma-glutamyl peptidase 5 (251 aa).

In terms of domain architecture, Glutamine amidotransferase type-1 spans Ser-17–Met-214. The Nucleophile role is filled by Cys-101. Residues His-193 and Glu-195 contribute to the active site.

The protein belongs to the peptidase C26 family.

The protein localises to the cytoplasm. It localises to the cytosol. Its pathway is secondary metabolite biosynthesis. Its function is as follows. Involved in glucosinolate biosynthesis. Hydrolyzes the gamma-glutamyl peptide bond of several glutathione (GSH) conjugates to produce Cys-Gly conjugates related to glucosinolates. The gamma-Glu-Cys-Gly-GSH conjugates are the sulfur-donating molecule in glucosinolate biosynthesis. The chain is Gamma-glutamyl peptidase 5 from Arabidopsis thaliana (Mouse-ear cress).